Reading from the N-terminus, the 1144-residue chain is PAN2-PAN3 deadenylation complex catalytic subunit PAN2 (1144 aa).

4 WD repeats span residues 27–66 (KKEK…YTRH), 153–193 (SSTY…VIHS), 196–233 (GHSA…NVYD), and 302–341 (HPCK…SGFT). Residues 344-481 (AAVLEYQDYP…LLEYKPSNNI (138 aa)) are linker. One can recognise a USP domain in the interval 482-887 (DIPPAYSKLQ…TPEIVVYSDA (406 aa)). The 172-residue stretch at 939 to 1110 (VALDAEFVSL…EDAHTALLLY (172 aa)) folds into the Exonuclease domain. Residues D942, E944, D1051, and D1102 each contribute to the a divalent metal cation site.

This sequence belongs to the peptidase C19 family. PAN2 subfamily. Forms a heterotrimer with an asymmetric homodimer of the regulatory subunit PAN3 to form the poly(A)-nuclease (PAN) deadenylation complex. It depends on a divalent metal cation as a cofactor.

The protein localises to the cytoplasm. The enzyme catalyses Exonucleolytic cleavage of poly(A) to 5'-AMP.. Its activity is regulated as follows. Positively regulated by the regulatory subunit PAN3. Its function is as follows. Catalytic subunit of the poly(A)-nuclease (PAN) deadenylation complex, one of two cytoplasmic mRNA deadenylases involved in mRNA turnover. PAN specifically shortens poly(A) tails of RNA and the activity is stimulated by poly(A)-binding protein PAB1. PAN deadenylation is followed by rapid degradation of the shortened mRNA tails by the CCR4-NOT complex. Deadenylated mRNAs are then degraded by two alternative mechanisms, namely exosome-mediated 3'-5' exonucleolytic degradation, or deadenylation-dependent mRNA decaping and subsequent 5'-3' exonucleolytic degradation by XRN1. May also be involved in post-transcriptional maturation of mRNA poly(A) tails. In Kluyveromyces lactis (strain ATCC 8585 / CBS 2359 / DSM 70799 / NBRC 1267 / NRRL Y-1140 / WM37) (Yeast), this protein is PAN2-PAN3 deadenylation complex catalytic subunit PAN2.